The following is a 207-amino-acid chain: Small ribosomal subunit protein uS4 (207 aa).

The tract at residues 31-54 (KCKLDSKPGQHGRTSGARTSDYGN) is disordered. The span at 42 to 53 (GRTSGARTSDYG) shows a compositional bias: polar residues. Residues 97 to 160 (SRLDNVVYRM…KKQVRIAEAL (64 aa)) form the S4 RNA-binding domain.

Belongs to the universal ribosomal protein uS4 family. As to quaternary structure, part of the 30S ribosomal subunit. Contacts protein S5. The interaction surface between S4 and S5 is involved in control of translational fidelity.

Its function is as follows. One of the primary rRNA binding proteins, it binds directly to 16S rRNA where it nucleates assembly of the body of the 30S subunit. In terms of biological role, with S5 and S12 plays an important role in translational accuracy. The polypeptide is Small ribosomal subunit protein uS4 (Cupriavidus metallidurans (strain ATCC 43123 / DSM 2839 / NBRC 102507 / CH34) (Ralstonia metallidurans)).